The primary structure comprises 504 residues: Glucose-6-phosphate isomerase (504 aa).

Catalysis depends on Glu-333, which acts as the Proton donor. Catalysis depends on residues His-364 and Lys-473.

Belongs to the GPI family.

It is found in the cytoplasm. The enzyme catalyses alpha-D-glucose 6-phosphate = beta-D-fructose 6-phosphate. The protein operates within carbohydrate biosynthesis; gluconeogenesis. Its pathway is carbohydrate degradation; glycolysis; D-glyceraldehyde 3-phosphate and glycerone phosphate from D-glucose: step 2/4. Functionally, catalyzes the reversible isomerization of glucose-6-phosphate to fructose-6-phosphate. This chain is Glucose-6-phosphate isomerase, found in Stenotrophomonas maltophilia (strain R551-3).